The chain runs to 142 residues: Secreted RxLR effector protein 161 (142 aa).

A signal peptide spans 1 to 27; sequence MKNVPYLSAVGAIMYLMVVTRPDLAAA. A RxLR motif is present at residues 48 to 51; that stretch reads RVLR.

This sequence belongs to the RxLR effector family.

The protein resides in the secreted. It localises to the host chloroplast envelope. The protein localises to the host nucleus. In terms of biological role, secreted effector that completely suppresses the host cell death induced by cell death-inducing proteins. In Plasmopara viticola (Downy mildew of grapevine), this protein is Secreted RxLR effector protein 161.